The chain runs to 477 residues: Protoporphyrinogen oxidase (477 aa).

Residues 9–14, 34–35, tryptophan 42, 57–60, valine 257, alanine 449, and 454–456 contribute to the FAD site; these read GGGISG, ES, GPRG, and VAV.

This sequence belongs to the protoporphyrinogen/coproporphyrinogen oxidase family. Protoporphyrinogen oxidase subfamily. In terms of assembly, monomer. Homodimer. It depends on FAD as a cofactor. Expressed in heart, brain, placenta, lung, liver, skeletal muscle, kidney and pancreas.

Its subcellular location is the mitochondrion inner membrane. The enzyme catalyses protoporphyrinogen IX + 3 O2 = protoporphyrin IX + 3 H2O2. It functions in the pathway porphyrin-containing compound metabolism; protoporphyrin-IX biosynthesis; protoporphyrin-IX from protoporphyrinogen-IX: step 1/1. Functionally, catalyzes the 6-electron oxidation of protoporphyrinogen-IX to form protoporphyrin-IX. In Homo sapiens (Human), this protein is Protoporphyrinogen oxidase (PPOX).